The primary structure comprises 51 residues: Large ribosomal subunit protein eL39 (51 aa).

The interval 32 to 51 (KRRVTRSPTRRHWRRVKLKA) is disordered.

It belongs to the eukaryotic ribosomal protein eL39 family.

The protein is Large ribosomal subunit protein eL39 of Pyrobaculum arsenaticum (strain DSM 13514 / JCM 11321 / PZ6).